A 232-amino-acid polypeptide reads, in one-letter code: Small ribosomal subunit protein uS5 (232 aa).

The segment at 1 to 47 (MAAEVTETAQPVETAASTDNNREQREPRRGGRERNPNRDRGNRDADK) is disordered. The span at 7–19 (ETAQPVETAASTD) shows a compositional bias: polar residues. Positions 20-47 (NNREQREPRRGGRERNPNRDRGNRDADK) are enriched in basic and acidic residues. Positions 50 to 113 (FLERVVTINR…EEAKKNFFRV (64 aa)) constitute an S5 DRBM domain.

The protein belongs to the universal ribosomal protein uS5 family. Part of the 30S ribosomal subunit. Contacts proteins S4 and S8.

With S4 and S12 plays an important role in translational accuracy. Its function is as follows. Located at the back of the 30S subunit body where it stabilizes the conformation of the head with respect to the body. In Leifsonia xyli subsp. xyli (strain CTCB07), this protein is Small ribosomal subunit protein uS5.